The primary structure comprises 258 residues: Pyridoxal phosphate homeostasis protein (258 aa).

Residue Lys47 is modified to N6-(pyridoxal phosphate)lysine.

This sequence belongs to the pyridoxal phosphate-binding protein YggS/PROSC family.

Its function is as follows. Pyridoxal 5'-phosphate (PLP)-binding protein, which is involved in PLP homeostasis. The protein is Pyridoxal phosphate homeostasis protein of Mycobacterium bovis (strain ATCC BAA-935 / AF2122/97).